A 285-amino-acid chain; its full sequence is Energy-coupling factor transporter ATP-binding protein EcfA3 (285 aa).

In terms of domain architecture, ABC transporter spans 6-242; sequence LKVEELNYNY…KEVIRKVNLR (237 aa). 39–46 lines the ATP pocket; it reads GGNGVGKS.

Belongs to the ABC transporter superfamily. Energy-coupling factor EcfA family. In terms of assembly, forms a stable energy-coupling factor (ECF) transporter complex composed of 2 membrane-embedded substrate-binding proteins (S component), 2 ATP-binding proteins (A component) and 2 transmembrane proteins (T component).

It is found in the cell membrane. Its function is as follows. ATP-binding (A) component of a common energy-coupling factor (ECF) ABC-transporter complex. Unlike classic ABC transporters this ECF transporter provides the energy necessary to transport a number of different substrates. The chain is Energy-coupling factor transporter ATP-binding protein EcfA3 from Clostridium perfringens (strain ATCC 13124 / DSM 756 / JCM 1290 / NCIMB 6125 / NCTC 8237 / Type A).